We begin with the raw amino-acid sequence, 185 residues long: Virulence membrane protein PagC (185 aa).

The signal sequence occupies residues 1 to 23 (MKNIILSTLVITTSVLVVNVAQA).

The protein belongs to the outer membrane OOP (TC 1.B.6) superfamily. Ail family.

The protein resides in the cell outer membrane. In terms of biological role, essential for full virulence and survival within macrophages. The sequence is that of Virulence membrane protein PagC (pagC) from Salmonella typhimurium (strain LT2 / SGSC1412 / ATCC 700720).